A 302-amino-acid chain; its full sequence is MAIADLTLSKSHAGSWRRYYELGKPKVVALILFTALVGMLLSVPGMVPWHTMLFGLLGIGLAAASGAALNHVIDRRIDAVMDRTRNRPLPTGQLETQKALVFAIAMGVVAMGILVLAVNVLTAVLTFFALIGYAVIYTVFLKRTTPQNIVWGGLAGALPPLLGWVAVTGQITVEPLLLVLLIFVWTPPHFWALAIRRREDYARAGIPMLPVTHGVAFTKLQVLLYTLMLLTVSLVPFIIHMTGLIYLVGALALGIGFVFHAYRLWRSPDDRYAMPTFGYSIFYLTAMFALLLVDHYVRMMMA.

9 helical membrane-spanning segments follow: residues 27–47 (VVAL…PGMV), 53–73 (LFGL…NHVI), 100–120 (LVFA…AVNV), 121–141 (LTAV…TVFL), 149–169 (IVWG…AVTG), 175–195 (PLLL…ALAI), 215–235 (VAFT…VSLV), 237–257 (FIIH…GIGF), and 273–293 (AMPT…LLLV).

This sequence belongs to the UbiA prenyltransferase family. Protoheme IX farnesyltransferase subfamily.

The protein localises to the cell inner membrane. The enzyme catalyses heme b + (2E,6E)-farnesyl diphosphate + H2O = Fe(II)-heme o + diphosphate. The protein operates within porphyrin-containing compound metabolism; heme O biosynthesis; heme O from protoheme: step 1/1. In terms of biological role, converts heme B (protoheme IX) to heme O by substitution of the vinyl group on carbon 2 of heme B porphyrin ring with a hydroxyethyl farnesyl side group. This Thioalkalivibrio sulfidiphilus (strain HL-EbGR7) protein is Protoheme IX farnesyltransferase.